The following is a 127-amino-acid chain: Small ribosomal subunit protein uS11 (127 aa).

The protein belongs to the universal ribosomal protein uS11 family. Part of the 30S ribosomal subunit. Interacts with proteins S7 and S18. Binds to IF-3.

Located on the platform of the 30S subunit, it bridges several disparate RNA helices of the 16S rRNA. Forms part of the Shine-Dalgarno cleft in the 70S ribosome. The polypeptide is Small ribosomal subunit protein uS11 (Chlorobaculum tepidum (strain ATCC 49652 / DSM 12025 / NBRC 103806 / TLS) (Chlorobium tepidum)).